Reading from the N-terminus, the 29-residue chain is GLWETIKNFGKKFTLNILHNLKCKIGGGC.

An intrachain disulfide couples Cys23 to Cys29.

The protein belongs to the frog skin active peptide (FSAP) family. Brevinin subfamily. As to expression, expressed by the skin glands.

It is found in the secreted. In terms of biological role, antibacterial activity against representative Gram-negative and Gram-positive bacteria. The sequence is that of Brevinin-2Td from Rana temporaria (European common frog).